The chain runs to 186 residues: Ribosome-recycling factor (186 aa).

It belongs to the RRF family.

The protein localises to the cytoplasm. In terms of biological role, responsible for the release of ribosomes from messenger RNA at the termination of protein biosynthesis. May increase the efficiency of translation by recycling ribosomes from one round of translation to another. The protein is Ribosome-recycling factor of Allorhizobium ampelinum (strain ATCC BAA-846 / DSM 112012 / S4) (Agrobacterium vitis (strain S4)).